Reading from the N-terminus, the 215-residue chain is UPF0502 protein YceH (215 aa).

Lys80 carries the post-translational modification N6-acetyllysine.

This sequence belongs to the UPF0502 family.

The sequence is that of UPF0502 protein YceH from Shigella boydii serotype 4 (strain Sb227).